We begin with the raw amino-acid sequence, 549 residues long: CTP synthase (549 aa).

The segment at 1-270 (MTKFVFVTGG…DRLICEELRL (270 aa)) is amidoligase domain. Ser13 is a binding site for CTP. A UTP-binding site is contributed by Ser13. ATP is bound by residues 14–19 (SLGKGI) and Asp71. Positions 71 and 144 each coordinate Mg(2+). Residues 151 to 153 (DIE), 191 to 196 (KTKPTQ), and Lys227 each bind CTP. UTP contacts are provided by residues 191-196 (KTKPTQ) and Lys227. Positions 295-547 (TIGMVGKYVD…VEAALAAQRQ (253 aa)) constitute a Glutamine amidotransferase type-1 domain. Gly356 lines the L-glutamine pocket. The active-site Nucleophile; for glutamine hydrolysis is Cys383. L-glutamine-binding positions include 384-387 (LGMQ), Glu407, and Arg473. Catalysis depends on residues His520 and Glu522.

This sequence belongs to the CTP synthase family. As to quaternary structure, homotetramer.

It carries out the reaction UTP + L-glutamine + ATP + H2O = CTP + L-glutamate + ADP + phosphate + 2 H(+). The enzyme catalyses L-glutamine + H2O = L-glutamate + NH4(+). It catalyses the reaction UTP + NH4(+) + ATP = CTP + ADP + phosphate + 2 H(+). The protein operates within pyrimidine metabolism; CTP biosynthesis via de novo pathway; CTP from UDP: step 2/2. Allosterically activated by GTP, when glutamine is the substrate; GTP has no effect on the reaction when ammonia is the substrate. The allosteric effector GTP functions by stabilizing the protein conformation that binds the tetrahedral intermediate(s) formed during glutamine hydrolysis. Inhibited by the product CTP, via allosteric rather than competitive inhibition. Catalyzes the ATP-dependent amination of UTP to CTP with either L-glutamine or ammonia as the source of nitrogen. Regulates intracellular CTP levels through interactions with the four ribonucleotide triphosphates. This is CTP synthase from Cupriavidus metallidurans (strain ATCC 43123 / DSM 2839 / NBRC 102507 / CH34) (Ralstonia metallidurans).